We begin with the raw amino-acid sequence, 588 residues long: Putative ABC transporter ATP-binding protein PAM_020 (588 aa).

ABC transporter domains follow at residues 6–247 and 317–551; these read IIFK…GIQE and LQLQ…TSLN. Residues 40-47 and 351-358 each bind ATP; these read GKNGSGKS.

This sequence belongs to the ABC transporter superfamily.

It is found in the cell membrane. Probably part of an ABC transporter complex. Responsible for energy coupling to the transport system. This Onion yellows phytoplasma (strain OY-M) protein is Putative ABC transporter ATP-binding protein PAM_020.